The chain runs to 88 residues: MMTAEKKKEIIAKFQQHEGDTGSPEVQIALLTERITYLTEHFKTHKKDHHSRRGLLKMVGQRRALLNYLKDMDFNRYRKIISDLGLRR.

It belongs to the universal ribosomal protein uS15 family. Part of the 30S ribosomal subunit. Forms a bridge to the 50S subunit in the 70S ribosome, contacting the 23S rRNA.

Functionally, one of the primary rRNA binding proteins, it binds directly to 16S rRNA where it helps nucleate assembly of the platform of the 30S subunit by binding and bridging several RNA helices of the 16S rRNA. Forms an intersubunit bridge (bridge B4) with the 23S rRNA of the 50S subunit in the ribosome. This chain is Small ribosomal subunit protein uS15, found in Desulfitobacterium hafniense (strain Y51).